We begin with the raw amino-acid sequence, 513 residues long: MLLAELAEVSRAVAATPARLEKVALLSEALRRLAPDERAVGASWLAGDLAGGRVGIGAATLRAALEAAPPGAAGPGLTVGEVDAALRRIAAAAGPGSGAARRRELDALLARAGDPERRFLAALVLGELRQGALEGVLSDAVARVAGLPGAEVRRAAMLAGALPPVAEAALAEGAAGLARFRLRVGEPVSPMLAQTAAGVDEALRALGGEAALEWKLDGARIQAHRDGDEVRVFSRSLREVTAAVPEVVALLRAAPEPLLVLDGEAIALRADGTPEPFQVTMRRFGRKLDVERLAPDLPLTAFFFDALVAGGGELLGAPERERWAALERAIPAERRVPRLVTGDAAEARAFLEEALARGQEGVVAKALDAPYEAGRRGAAWLKVKRAHTLDLVVLAAEWGSGRRRGWLSNLHLGARDPATGEFVMLGKTFKGMTDAMLAWQTERLKALATGPLDAWQVPVRPELVVEVAFDGIQASPRYPGGLALRFARVKRYREDKRPEDADTIETVRGLYGG.

Glu-213 lines the ATP pocket. The active-site N6-AMP-lysine intermediate is Lys-215. Arg-220, Arg-235, Glu-264, Phe-304, Arg-376, and Lys-382 together coordinate ATP.

It belongs to the ATP-dependent DNA ligase family. It depends on Mg(2+) as a cofactor.

It catalyses the reaction ATP + (deoxyribonucleotide)n-3'-hydroxyl + 5'-phospho-(deoxyribonucleotide)m = (deoxyribonucleotide)n+m + AMP + diphosphate.. DNA ligase that seals nicks in double-stranded DNA during DNA replication, DNA recombination and DNA repair. This chain is Probable DNA ligase, found in Anaeromyxobacter sp. (strain K).